Consider the following 449-residue polypeptide: MTHIKFDYSKVLGKFLASHELDYIQMQVTAADEALRKGTGPGAEMTGWLNLPQNYDKEEFARIKKAAEKIKSDSEVLVVIGIGGSYLGARAAIDFLNSSFVNLENKEERKAPQILYAGNSISSNYLADLVDYVADKDFSVNVISKSGTTTEPAIAFRVFKDLLVKKYGQEEANQRIYATTDRVKGAVKVEADANGWETFVVPDSVGGRFTVLTAVGLLPIAASGADLDQLMAGAEAARQDYSSAELSENEAYQYAAIRNILYRKGYVTEVLANYEPSLQYFSEWWKQLAGESEGKDQKGIYPTSANFSTDLHSLGQFIQEGNRNLFETVIRVEKARKNILVPEAAEDLDGLAYLQGKDVDFVNKKATDGVLLAHTDGGVPNTFLTIPEQDEFTLGYVIYFFELAIGLSGYLNGVNPFDQPGVEAYKKNMFALLGKPGFEELGAELNARL.

Glutamate 291 (proton donor) is an active-site residue. Catalysis depends on residues histidine 312 and lysine 426.

It belongs to the GPI family.

Its subcellular location is the cytoplasm. It catalyses the reaction alpha-D-glucose 6-phosphate = beta-D-fructose 6-phosphate. The protein operates within carbohydrate biosynthesis; gluconeogenesis. It participates in carbohydrate degradation; glycolysis; D-glyceraldehyde 3-phosphate and glycerone phosphate from D-glucose: step 2/4. In terms of biological role, catalyzes the reversible isomerization of glucose-6-phosphate to fructose-6-phosphate. The chain is Glucose-6-phosphate isomerase from Streptococcus mutans serotype c (strain ATCC 700610 / UA159).